The following is a 163-amino-acid chain: Endoribonuclease YbeY (163 aa).

3 residues coordinate Zn(2+): His-121, His-125, and His-131.

It belongs to the endoribonuclease YbeY family. Zn(2+) is required as a cofactor.

The protein resides in the cytoplasm. Single strand-specific metallo-endoribonuclease involved in late-stage 70S ribosome quality control and in maturation of the 3' terminus of the 16S rRNA. The chain is Endoribonuclease YbeY from Synechococcus sp. (strain JA-3-3Ab) (Cyanobacteria bacterium Yellowstone A-Prime).